The chain runs to 118 residues: Small ribosomal subunit protein uS13 (118 aa).

Residues 94-118 (SLPLRGQRTKTNARTRKGPRKPIRK) are disordered.

This sequence belongs to the universal ribosomal protein uS13 family. As to quaternary structure, part of the 30S ribosomal subunit. Forms a loose heterodimer with protein S19. Forms two bridges to the 50S subunit in the 70S ribosome.

In terms of biological role, located at the top of the head of the 30S subunit, it contacts several helices of the 16S rRNA. In the 70S ribosome it contacts the 23S rRNA (bridge B1a) and protein L5 of the 50S subunit (bridge B1b), connecting the 2 subunits; these bridges are implicated in subunit movement. Contacts the tRNAs in the A and P-sites. This chain is Small ribosomal subunit protein uS13, found in Shewanella baltica (strain OS223).